The chain runs to 461 residues: Trigger factor (461 aa).

The region spanning 166–245 (GDFANIDLTA…VNSVKAEELP (80 aa)) is the PPIase FKBP-type domain.

This sequence belongs to the FKBP-type PPIase family. Tig subfamily.

The protein resides in the cytoplasm. The enzyme catalyses [protein]-peptidylproline (omega=180) = [protein]-peptidylproline (omega=0). Functionally, involved in protein export. Acts as a chaperone by maintaining the newly synthesized protein in an open conformation. Functions as a peptidyl-prolyl cis-trans isomerase. This chain is Trigger factor, found in Bifidobacterium animalis subsp. lactis (strain AD011).